The following is a 265-amino-acid chain: RNA polymerase sigma factor SigI2 (265 aa).

The Polymerase core binding signature appears at 71-84; the sequence is DEFSVGLAAFNEAI. Residues 211-230 constitute a DNA-binding region (H-T-H motif); it reads KTELLKLLKINKKTIERNRT.

The protein belongs to the sigma-70 factor family. SigI subfamily. Interacts with RsgI2.

The protein resides in the cytoplasm. Negatively regulated by the anti-sigma-I factor RsgI2. Binding of the polysaccharide substrate to RsgI2 may lead to the release and activation of SigI2. Sigma factors are initiation factors that promote the attachment of RNA polymerase to specific initiation sites and are then released. This sigma factor is involved in regulation of cellulosomal genes via an external polysaccharide-sensing mechanism. The chain is RNA polymerase sigma factor SigI2 from Acetivibrio thermocellus (strain ATCC 27405 / DSM 1237 / JCM 9322 / NBRC 103400 / NCIMB 10682 / NRRL B-4536 / VPI 7372) (Clostridium thermocellum).